The sequence spans 119 residues: Large ribosomal subunit protein uL18 (119 aa).

Belongs to the universal ribosomal protein uL18 family. As to quaternary structure, part of the 50S ribosomal subunit; part of the 5S rRNA/L5/L18/L25 subcomplex. Contacts the 5S and 23S rRNAs.

In terms of biological role, this is one of the proteins that bind and probably mediate the attachment of the 5S RNA into the large ribosomal subunit, where it forms part of the central protuberance. This is Large ribosomal subunit protein uL18 from Malacoplasma penetrans (strain HF-2) (Mycoplasma penetrans).